The primary structure comprises 451 residues: Enolase (451 aa).

Glutamine 163 serves as a coordination point for (2R)-2-phosphoglycerate. Glutamate 205 acts as the Proton donor in catalysis. Residues aspartate 258, glutamate 308, and aspartate 335 each contribute to the Mg(2+) site. Lysine 360, arginine 389, serine 390, and lysine 411 together coordinate (2R)-2-phosphoglycerate. Lysine 360 (proton acceptor) is an active-site residue.

The protein belongs to the enolase family. Requires Mg(2+) as cofactor.

It localises to the cytoplasm. The protein localises to the secreted. It is found in the cell surface. It catalyses the reaction (2R)-2-phosphoglycerate = phosphoenolpyruvate + H2O. Its pathway is carbohydrate degradation; glycolysis; pyruvate from D-glyceraldehyde 3-phosphate: step 4/5. In terms of biological role, catalyzes the reversible conversion of 2-phosphoglycerate (2-PG) into phosphoenolpyruvate (PEP). It is essential for the degradation of carbohydrates via glycolysis. This chain is Enolase, found in Mycoplasma capricolum subsp. capricolum (strain California kid / ATCC 27343 / NCTC 10154).